The chain runs to 147 residues: Deoxyuridine 5'-triphosphate nucleotidohydrolase (147 aa).

Residues Arg67–Gly69, Asn80, and Thr84–Asp86 contribute to the substrate site.

It belongs to the dUTPase family. Mg(2+) serves as cofactor.

The catalysed reaction is dUTP + H2O = dUMP + diphosphate + H(+). The protein operates within pyrimidine metabolism; dUMP biosynthesis; dUMP from dCTP (dUTP route): step 2/2. Its function is as follows. This enzyme is involved in nucleotide metabolism: it produces dUMP, the immediate precursor of thymidine nucleotides and it decreases the intracellular concentration of dUTP so that uracil cannot be incorporated into DNA. The protein is Deoxyuridine 5'-triphosphate nucleotidohydrolase of Anaeromyxobacter dehalogenans (strain 2CP-C).